The sequence spans 214 residues: Pyridoxine/pyridoxamine 5'-phosphate oxidase (214 aa).

Substrate contacts are provided by residues 8–11 (RINY) and Lys-66. FMN is bound by residues 61–66 (RIVLVK), 76–77 (FT), Arg-82, Lys-83, and Gln-105. Residues Tyr-123, Arg-127, and Ser-131 each coordinate substrate. FMN contacts are provided by residues 140–141 (QS) and Trp-184. 190–192 (RLH) contacts substrate. Arg-194 serves as a coordination point for FMN.

This sequence belongs to the pyridoxamine 5'-phosphate oxidase family. Homodimer. It depends on FMN as a cofactor.

The catalysed reaction is pyridoxamine 5'-phosphate + O2 + H2O = pyridoxal 5'-phosphate + H2O2 + NH4(+). It catalyses the reaction pyridoxine 5'-phosphate + O2 = pyridoxal 5'-phosphate + H2O2. It participates in cofactor metabolism; pyridoxal 5'-phosphate salvage; pyridoxal 5'-phosphate from pyridoxamine 5'-phosphate: step 1/1. It functions in the pathway cofactor metabolism; pyridoxal 5'-phosphate salvage; pyridoxal 5'-phosphate from pyridoxine 5'-phosphate: step 1/1. Catalyzes the oxidation of either pyridoxine 5'-phosphate (PNP) or pyridoxamine 5'-phosphate (PMP) into pyridoxal 5'-phosphate (PLP). The protein is Pyridoxine/pyridoxamine 5'-phosphate oxidase of Burkholderia multivorans (strain ATCC 17616 / 249).